Reading from the N-terminus, the 258-residue chain is MFKVRVIPCLDVKDGRVVKGINFVDLRDAGDPVEAAIAYDAAGADELCFLDITATHENRGIMLDVVRRTAEACFMPLTVGGGVRTVDDIKVLLRSGADKVSINSAAVSRREFVKEAAEKFGDQCIVVAIDAKRVKRGGGGERWEIFTHGGRNSTGIDAIEYAQEVVSLGAGEILLTSMDRDGTRQGFDIPLTSAIADSVHVPVIASGGVGTLDHLVDGIRNGHATAVLAASIFHFGEFTIRQAKDHMVRAGLPMRLDP.

Active-site residues include Asp11 and Asp130.

Belongs to the HisA/HisF family. Heterodimer of HisH and HisF.

It localises to the cytoplasm. The enzyme catalyses 5-[(5-phospho-1-deoxy-D-ribulos-1-ylimino)methylamino]-1-(5-phospho-beta-D-ribosyl)imidazole-4-carboxamide + L-glutamine = D-erythro-1-(imidazol-4-yl)glycerol 3-phosphate + 5-amino-1-(5-phospho-beta-D-ribosyl)imidazole-4-carboxamide + L-glutamate + H(+). It functions in the pathway amino-acid biosynthesis; L-histidine biosynthesis; L-histidine from 5-phospho-alpha-D-ribose 1-diphosphate: step 5/9. In terms of biological role, IGPS catalyzes the conversion of PRFAR and glutamine to IGP, AICAR and glutamate. The HisF subunit catalyzes the cyclization activity that produces IGP and AICAR from PRFAR using the ammonia provided by the HisH subunit. In Rhodopseudomonas palustris (strain BisB18), this protein is Imidazole glycerol phosphate synthase subunit HisF.